The primary structure comprises 707 residues: Lipase maturation factor 2 (707 aa).

Transmembrane regions (helical) follow at residues 11-31 (FLWG…AQIP), 78-98 (MEMI…FSFL), 102-122 (LVFL…QVFL), 126-146 (WDSL…VHAL), 220-240 (FSVV…FLPF), 256-276 (ILII…VLCC), 306-326 (LYSL…FWTV), 358-378 (ITFP…LKGM), and 398-418 (VIFS…YTYI). Asn483 carries N-linked (GlcNAc...) asparagine glycosylation. A helical transmembrane segment spans residues 634-654 (LLLHSFIFGIFTIYFLQAMFG). Residues 659 to 707 (PGVAKQRHSKPPNEKKKQKSNSGQGESAAAKSSGHGADTVRRNKKNEKS) are disordered. The span at 696–707 (DTVRRNKKNEKS) shows a compositional bias: basic and acidic residues.

Belongs to the lipase maturation factor family.

It is found in the endoplasmic reticulum membrane. Its function is as follows. Involved in the maturation of specific proteins in the endoplasmic reticulum. This is Lipase maturation factor 2 (lmf2) from Xenopus tropicalis (Western clawed frog).